We begin with the raw amino-acid sequence, 249 residues long: Coproheme decarboxylase (249 aa).

Fe-coproporphyrin III contacts are provided by residues arginine 131, 145 to 149 (YPMDK), histidine 172, and glutamine 185. Tyrosine 145 is an active-site residue.

This sequence belongs to the ChdC family. Type 1 subfamily. Requires Fe-coproporphyrin III as cofactor.

It carries out the reaction Fe-coproporphyrin III + 2 H2O2 + 2 H(+) = heme b + 2 CO2 + 4 H2O. The catalysed reaction is Fe-coproporphyrin III + H2O2 + H(+) = harderoheme III + CO2 + 2 H2O. The enzyme catalyses harderoheme III + H2O2 + H(+) = heme b + CO2 + 2 H2O. Its pathway is porphyrin-containing compound metabolism; protoheme biosynthesis. Its function is as follows. Involved in coproporphyrin-dependent heme b biosynthesis. Catalyzes the decarboxylation of Fe-coproporphyrin III (coproheme) to heme b (protoheme IX), the last step of the pathway. The reaction occurs in a stepwise manner with a three-propionate intermediate. The polypeptide is Coproheme decarboxylase (Staphylococcus epidermidis (strain ATCC 35984 / DSM 28319 / BCRC 17069 / CCUG 31568 / BM 3577 / RP62A)).